Here is a 91-residue protein sequence, read N- to C-terminus: MKVSAATFAILLATATFRAPASASPYASDTTPCCFAYISGRLPFTHVQEYFYTSSKCSMPAVVFVTRKHRQVCANPQKKWVREYINSLEMS.

Positions 1 to 23 are cleaved as a signal peptide; sequence MKVSAATFAILLATATFRAPASA. Disulfide bonds link C33/C57 and C34/C73.

Belongs to the intercrine beta (chemokine CC) family.

It localises to the secreted. Chemoattractant for blood monocytes, memory T-helper cells and eosinophils. Causes the release of histamine from basophils and activates eosinophils. May activate several chemokine receptors including CCR1, CCR3, CCR4 and CCR5. May also be an agonist of the G protein-coupled receptor GPR75. Together with GPR75, may play a role in neuron survival through activation of a downstream signaling pathway involving the PI3, Akt and MAP kinases. By activating GPR75 may also play a role in insulin secretion by islet cells. The polypeptide is C-C motif chemokine 5 (CCL5) (Canis lupus familiaris (Dog)).